Here is a 406-residue protein sequence, read N- to C-terminus: DNA primase large subunit PriL (406 aa).

Residues Cys-302, Cys-375, Cys-384, and Cys-389 each contribute to the [4Fe-4S] cluster site.

This sequence belongs to the eukaryotic-type primase large subunit family. In terms of assembly, heterodimer of a small subunit (PriS) and a large subunit (PriL). Requires [4Fe-4S] cluster as cofactor.

Functionally, regulatory subunit of DNA primase, an RNA polymerase that catalyzes the synthesis of short RNA molecules used as primers for DNA polymerase during DNA replication. Stabilizes and modulates the activity of the small subunit, increasing the rate of DNA synthesis, and conferring RNA synthesis capability. The DNA polymerase activity may enable DNA primase to also catalyze primer extension after primer synthesis. May also play a role in DNA repair. The sequence is that of DNA primase large subunit PriL from Methanopyrus kandleri (strain AV19 / DSM 6324 / JCM 9639 / NBRC 100938).